The following is a 287-amino-acid chain: Small ribosomal subunit biogenesis GTPase RsgA (287 aa).

Residues 61–218 (ISQLKRPAVA…MVDTPGFSSL (158 aa)) enclose the CP-type G domain. GTP-binding positions include 110–113 (NKLD) and 161–169 (GPSGVGKST). Zn(2+)-binding residues include cysteine 242, cysteine 247, histidine 249, and cysteine 255.

This sequence belongs to the TRAFAC class YlqF/YawG GTPase family. RsgA subfamily. As to quaternary structure, monomer. Associates with 30S ribosomal subunit, binds 16S rRNA. Requires Zn(2+) as cofactor.

The protein localises to the cytoplasm. In terms of biological role, one of several proteins that assist in the late maturation steps of the functional core of the 30S ribosomal subunit. Helps release RbfA from mature subunits. May play a role in the assembly of ribosomal proteins into the subunit. Circularly permuted GTPase that catalyzes slow GTP hydrolysis, GTPase activity is stimulated by the 30S ribosomal subunit. In Clostridium kluyveri (strain NBRC 12016), this protein is Small ribosomal subunit biogenesis GTPase RsgA.